We begin with the raw amino-acid sequence, 453 residues long: Crh-like protein CRH11 (453 aa).

The first 21 residues, 1-21 (MKFTTLATIASTLLFAANANA), serve as a signal peptide directing secretion. Cysteines 24 and 32 form a disulfide. One can recognise a GH16 domain in the interval 28–227 (KSSDCSPVPA…WAGGITDYSQ (200 aa)). Glu-119 functions as the Nucleophile in the catalytic mechanism. The Proton donor role is filled by Glu-123. Chitin is bound by residues Glu-123, Trp-204, and Thr-215. Disordered stretches follow at residues 281 to 343 (LESG…SEKS), 362 to 397 (KTTV…PASA), and 410 to 430 (GDAA…TENN). Composition is skewed to low complexity over residues 286 to 343 (SVDS…SEKS), 363 to 397 (TTVT…PASA), and 412 to 425 (AAPS…PSVS). The N-linked (GlcNAc...) asparagine glycan is linked to Asn-290. A lipid anchor (GPI-anchor amidated asparagine) is attached at Asn-430. A propeptide spans 431–453 (GAVSVAKTTSLFGFVALIGFLFV) (removed in mature form).

This sequence belongs to the glycosyl hydrolase 16 family. CRH1 subfamily. Post-translationally, the GPI-anchor is attached to the protein in the endoplasmic reticulum and serves to target the protein to the cell surface. There, the glucosamine-inositol phospholipid moiety is cleaved off and the GPI-modified mannoprotein is covalently attached via its lipidless GPI glycan remnant to the 1,6-beta-glucan of the outer cell wall layer.

The protein localises to the secreted. It localises to the cell wall. Its subcellular location is the membrane. It carries out the reaction Random endo-hydrolysis of N-acetyl-beta-D-glucosaminide (1-&gt;4)-beta-linkages in chitin and chitodextrins.. Dual chitinase/transglycosylase that plays a role in cell wall architecture. Chitinase and transglycosylase activities are coupled. Required for the polysaccharide cross-linking at the septa and the cell wall. More specifically, transfers chitin to 1,6-beta-glucan in the cell wall. Plays an important role in fungal pathogenesis via its functions in cell wall assembly and regeneration, filamentation, and adherence to host cells. This is Crh-like protein CRH11 (CRH11) from Candida albicans (strain SC5314 / ATCC MYA-2876) (Yeast).